The sequence spans 522 residues: Maturase K (522 aa).

It belongs to the intron maturase 2 family. MatK subfamily.

The protein localises to the plastid. The protein resides in the chloroplast. Functionally, usually encoded in the trnK tRNA gene intron. Probably assists in splicing its own and other chloroplast group II introns. The sequence is that of Maturase K from Pillansia templemannii.